The following is a 321-amino-acid chain: Beta-ketoacyl-[acyl-carrier-protein] synthase III (321 aa).

Catalysis depends on residues cysteine 115 and histidine 248. An ACP-binding region spans residues 249–253 (QANIR). The active site involves asparagine 278.

It belongs to the thiolase-like superfamily. FabH family. In terms of assembly, homodimer.

The protein resides in the cytoplasm. It carries out the reaction malonyl-[ACP] + acetyl-CoA + H(+) = 3-oxobutanoyl-[ACP] + CO2 + CoA. The protein operates within lipid metabolism; fatty acid biosynthesis. Functionally, catalyzes the condensation reaction of fatty acid synthesis by the addition to an acyl acceptor of two carbons from malonyl-ACP. Catalyzes the first condensation reaction which initiates fatty acid synthesis and may therefore play a role in governing the total rate of fatty acid production. Possesses both acetoacetyl-ACP synthase and acetyl transacylase activities. Its substrate specificity determines the biosynthesis of branched-chain and/or straight-chain of fatty acids. This is Beta-ketoacyl-[acyl-carrier-protein] synthase III from Azoarcus sp. (strain BH72).